Consider the following 123-residue polypeptide: Large ribosomal subunit protein bL12 (123 aa).

It belongs to the bacterial ribosomal protein bL12 family. As to quaternary structure, homodimer. Part of the ribosomal stalk of the 50S ribosomal subunit. Forms a multimeric L10(L12)X complex, where L10 forms an elongated spine to which 2 to 4 L12 dimers bind in a sequential fashion. Binds GTP-bound translation factors.

In terms of biological role, forms part of the ribosomal stalk which helps the ribosome interact with GTP-bound translation factors. Is thus essential for accurate translation. The sequence is that of Large ribosomal subunit protein bL12 from Chromobacterium violaceum (strain ATCC 12472 / DSM 30191 / JCM 1249 / CCUG 213 / NBRC 12614 / NCIMB 9131 / NCTC 9757 / MK).